Here is a 397-residue protein sequence, read N- to C-terminus: Succinate--CoA ligase [ADP-forming] subunit beta (397 aa).

The ATP-grasp domain occupies 9–254; sequence KALLREFGVP…ESEEDAKEIE (246 aa). Residues Lys46, 53–55, Glu109, Ser112, and Glu117 each bind ATP; that span reads GRG. Residues Asn209 and Asp223 each contribute to the Mg(2+) site. Substrate contacts are provided by residues Asn274 and 331 to 333; that span reads GIM.

This sequence belongs to the succinate/malate CoA ligase beta subunit family. Heterotetramer of two alpha and two beta subunits. Mg(2+) is required as a cofactor.

It catalyses the reaction succinate + ATP + CoA = succinyl-CoA + ADP + phosphate. It carries out the reaction GTP + succinate + CoA = succinyl-CoA + GDP + phosphate. It participates in carbohydrate metabolism; tricarboxylic acid cycle; succinate from succinyl-CoA (ligase route): step 1/1. Succinyl-CoA synthetase functions in the citric acid cycle (TCA), coupling the hydrolysis of succinyl-CoA to the synthesis of either ATP or GTP and thus represents the only step of substrate-level phosphorylation in the TCA. The beta subunit provides nucleotide specificity of the enzyme and binds the substrate succinate, while the binding sites for coenzyme A and phosphate are found in the alpha subunit. The chain is Succinate--CoA ligase [ADP-forming] subunit beta from Nitrobacter hamburgensis (strain DSM 10229 / NCIMB 13809 / X14).